Reading from the N-terminus, the 341-residue chain is tRNA N6-adenosine threonylcarbamoyltransferase (341 aa).

2 residues coordinate Fe cation: H111 and H115. Residues 134-138 (LVSGG), D167, G180, and N272 each bind substrate. D300 is a Fe cation binding site.

Belongs to the KAE1 / TsaD family. The cofactor is Fe(2+).

The protein resides in the cytoplasm. The enzyme catalyses L-threonylcarbamoyladenylate + adenosine(37) in tRNA = N(6)-L-threonylcarbamoyladenosine(37) in tRNA + AMP + H(+). Functionally, required for the formation of a threonylcarbamoyl group on adenosine at position 37 (t(6)A37) in tRNAs that read codons beginning with adenine. Is involved in the transfer of the threonylcarbamoyl moiety of threonylcarbamoyl-AMP (TC-AMP) to the N6 group of A37, together with TsaE and TsaB. TsaD likely plays a direct catalytic role in this reaction. The sequence is that of tRNA N6-adenosine threonylcarbamoyltransferase from Psychromonas ingrahamii (strain DSM 17664 / CCUG 51855 / 37).